A 70-amino-acid polypeptide reads, in one-letter code: MDLNLRHAVIANVSGNSQEELEHTIVDAIQSGEEKMLPGLGVLFEVIWQHATESDKTEMLETLEQGLKAK.

This sequence belongs to the SspI family.

Its subcellular location is the spore core. This Bacillus licheniformis (strain ATCC 14580 / DSM 13 / JCM 2505 / CCUG 7422 / NBRC 12200 / NCIMB 9375 / NCTC 10341 / NRRL NRS-1264 / Gibson 46) protein is Small, acid-soluble spore protein I.